The chain runs to 212 residues: Ribonuclease HII (212 aa).

The region spanning 22–211 is the RNase H type-2 domain; it reads GLVAGVDEVG…VADRILLQNT (190 aa). A divalent metal cation is bound by residues Asp28, Glu29, and Asp120.

It belongs to the RNase HII family. It depends on Mn(2+) as a cofactor. Mg(2+) is required as a cofactor.

The protein resides in the cytoplasm. The enzyme catalyses Endonucleolytic cleavage to 5'-phosphomonoester.. Functionally, endonuclease that specifically degrades the RNA of RNA-DNA hybrids. This Shewanella frigidimarina (strain NCIMB 400) protein is Ribonuclease HII.